Reading from the N-terminus, the 445-residue chain is Tubulin beta-5 chain (445 aa).

GTP contacts are provided by Gln-11, Glu-69, Ser-138, Gly-142, Thr-143, Gly-144, Asn-204, and Asn-226. Mg(2+) is bound at residue Glu-69. A disordered region spans residues 420–445 (AEYQQYQDATADDEYEEGEEEEEEAA). The segment covering 429–445 (TADDEYEEGEEEEEEAA) has biased composition (acidic residues).

This sequence belongs to the tubulin family. In terms of assembly, dimer of alpha and beta chains. A typical microtubule is a hollow water-filled tube with an outer diameter of 25 nm and an inner diameter of 15 nM. Alpha-beta heterodimers associate head-to-tail to form protofilaments running lengthwise along the microtubule wall with the beta-tubulin subunit facing the microtubule plus end conferring a structural polarity. Microtubules usually have 13 protofilaments but different protofilament numbers can be found in some organisms and specialized cells. Mg(2+) serves as cofactor.

Its subcellular location is the cytoplasm. The protein localises to the cytoskeleton. Functionally, tubulin is the major constituent of microtubules, a cylinder consisting of laterally associated linear protofilaments composed of alpha- and beta-tubulin heterodimers. Microtubules grow by the addition of GTP-tubulin dimers to the microtubule end, where a stabilizing cap forms. Below the cap, tubulin dimers are in GDP-bound state, owing to GTPase activity of alpha-tubulin. In Gossypium hirsutum (Upland cotton), this protein is Tubulin beta-5 chain.